A 556-amino-acid chain; its full sequence is Adenine deaminase (556 aa).

The protein belongs to the metallo-dependent hydrolases superfamily. Adenine deaminase family. Requires Mn(2+) as cofactor.

The catalysed reaction is adenine + H2O + H(+) = hypoxanthine + NH4(+). This is Adenine deaminase from Archaeoglobus fulgidus (strain ATCC 49558 / DSM 4304 / JCM 9628 / NBRC 100126 / VC-16).